We begin with the raw amino-acid sequence, 434 residues long: Ribosomal protein uS12 methylthiotransferase RimO (434 aa).

The MTTase N-terminal domain occupies 4–122; sequence NRVDVITLGC…LISHLGKSYY (119 aa). 6 residues coordinate [4Fe-4S] cluster: Cys-13, Cys-51, Cys-85, Cys-146, Cys-150, and Cys-153. The region spanning 132–363 is the Radical SAM core domain; sequence TTPRHYAYLK…MAVQERISAA (232 aa). The region spanning 366-434 is the TRAM domain; the sequence is EAKIGSRLRV…PFDLYARIVD (69 aa).

This sequence belongs to the methylthiotransferase family. RimO subfamily. The cofactor is [4Fe-4S] cluster.

The protein localises to the cytoplasm. It carries out the reaction L-aspartate(89)-[ribosomal protein uS12]-hydrogen + (sulfur carrier)-SH + AH2 + 2 S-adenosyl-L-methionine = 3-methylsulfanyl-L-aspartate(89)-[ribosomal protein uS12]-hydrogen + (sulfur carrier)-H + 5'-deoxyadenosine + L-methionine + A + S-adenosyl-L-homocysteine + 2 H(+). Functionally, catalyzes the methylthiolation of an aspartic acid residue of ribosomal protein uS12. In Porphyromonas gingivalis (strain ATCC 33277 / DSM 20709 / CIP 103683 / JCM 12257 / NCTC 11834 / 2561), this protein is Ribosomal protein uS12 methylthiotransferase RimO.